A 263-amino-acid chain; its full sequence is Endonuclease 8 (263 aa).

Catalysis depends on proline 2, which acts as the Schiff-base intermediate with DNA. The active-site Proton donor is glutamate 3. Residue lysine 53 is the Proton donor; for beta-elimination activity of the active site. Residues glutamine 70, arginine 125, and asparagine 169 each coordinate DNA. Residues 229-263 form an FPG-type zinc finger; sequence KVFHRDGEACERCGGIIEKTTLSSRPFYWCPHCQK. Residue arginine 253 is the Proton donor; for delta-elimination activity of the active site.

The protein belongs to the FPG family. Zn(2+) serves as cofactor.

The catalysed reaction is 2'-deoxyribonucleotide-(2'-deoxyribose 5'-phosphate)-2'-deoxyribonucleotide-DNA = a 3'-end 2'-deoxyribonucleotide-(2,3-dehydro-2,3-deoxyribose 5'-phosphate)-DNA + a 5'-end 5'-phospho-2'-deoxyribonucleoside-DNA + H(+). In terms of biological role, involved in base excision repair of DNA damaged by oxidation or by mutagenic agents. Acts as a DNA glycosylase that recognizes and removes damaged bases. Has a preference for oxidized pyrimidines, such as thymine glycol, 5,6-dihydrouracil and 5,6-dihydrothymine. Has AP (apurinic/apyrimidinic) lyase activity and introduces nicks in the DNA strand. Cleaves the DNA backbone by beta-delta elimination to generate a single-strand break at the site of the removed base with both 3'- and 5'-phosphates. This chain is Endonuclease 8, found in Salmonella paratyphi B (strain ATCC BAA-1250 / SPB7).